Consider the following 142-residue polypeptide: MAWTSVLLMLLAHLTGCGPQPMVHQPPSASSSLGATIRLSCTLSNDHNIGIYSIYWYQQRPGHPPRFLLRYFSHSDKHQGPDIPPRFSGSKDTARNLGYLSISELQPEDEAVYYCAVGLRSHEKKRMEREWEGEKSYTDLGS.

The first 19 residues, 1–19 (MAWTSVLLMLLAHLTGCGP), serve as a signal peptide directing secretion. Positions 20 to 41 (QPMVHQPPSASSSLGATIRLSC) are framework-1. Residues Cys-41 and Cys-115 are joined by a disulfide bond. The segment at 42-56 (TLSNDHNIGIYSIYW) is complementarity-determining-1. Residues 57–70 (YQQRPGHPPRFLLR) are framework-2. A complementarity-determining-2 region spans residues 71 to 81 (YFSHSDKHQGP). The segment at 82 to 115 (DIPPRFSGSKDTARNLGYLSISELQPEDEAVYYC) is framework-3.

This sequence belongs to the immunoglobulin superfamily. In terms of tissue distribution, only expressed by pre-B-cells.

Associates with the Ig-mu chain to form a molecular complex that is expressed on the surface of pre-B-cells. This complex presumably regulates Ig gene rearrangements in the early steps of B-cell differentiation. This chain is Immunoglobulin omega chain, found in Mus musculus (Mouse).